We begin with the raw amino-acid sequence, 288 residues long: Energy-coupling factor transporter ATP-binding protein EcfA2 (288 aa).

An ABC transporter domain is found at 2 to 244; sequence IKFEKVNYTY…VDFLKAHELG (243 aa). 39-46 is an ATP binding site; that stretch reads GHTGSGKS. Residue E170 is the Proton acceptor of the active site.

Belongs to the ABC transporter superfamily. Energy-coupling factor EcfA family. In terms of assembly, forms a stable energy-coupling factor (ECF) transporter complex composed of 2 membrane-embedded substrate-binding proteins (S component), 2 ATP-binding proteins (A component) and 2 transmembrane proteins (T component). In L.lactis forms a stable complex with EcfA' and EcfT and substrate-binding components. In E.coli forms a stable complex with EcfA, EcfT and individually with 3 tested substrate-binding components (BioY, NiaX and ThiT) with a stoichiometry of 1.1:1:1. The core ECF complex interacts with a number of substrate-specific binding components, including BioY, BioY2, HmpT, NiaX, PanT, QueT, RibU and ThiT.

The protein resides in the cell membrane. ATP-binding (A) component of a common energy-coupling factor (ECF) ABC-transporter complex. Unlike classic ABC transporters this ECF transporter provides the energy necessary to transport a number of different substrates. In this organism these probably include biotin, thiamine precursor, niacin, pantothenic acid, queuosine precursor, riboflavin and thiamine. Uptake of niacin or riboflavin into proteosomes containing EcfA1A2T and Niax or RibU has been demonstrated. Uptake requires hydrolyzable Mg-ATP and is substrate-specific; NiaX-containing proteosomes did not transport riboflavin. This is Energy-coupling factor transporter ATP-binding protein EcfA2 from Lactococcus lactis subsp. cremoris (strain MG1363).